We begin with the raw amino-acid sequence, 740 residues long: Catalase-peroxidase (740 aa).

The span at 1-14 shows a compositional bias: basic and acidic residues; it reads MTENHDAIVTDAKS. The disordered stretch occupies residues 1–21; sequence MTENHDAIVTDAKSEGSGGCP. A cross-link (tryptophyl-tyrosyl-methioninium (Trp-Tyr) (with M-257)) is located at residues 108 to 231; it reads WHSAGTYRIS…LGAVQMGLIY (124 aa). The active-site Proton acceptor is the His-109. Residues 231–257 constitute a cross-link (tryptophyl-tyrosyl-methioninium (Tyr-Met) (with W-108)); it reads YVNPEGPNGNPDPIAAARDIRETFRRM. Heme b is bound at residue His-272.

This sequence belongs to the peroxidase family. Peroxidase/catalase subfamily. Homodimer. The cofactor is heme b. Post-translationally, formation of the three residue Trp-Tyr-Met cross-link is important for the catalase, but not the peroxidase activity of the enzyme.

It carries out the reaction H2O2 + AH2 = A + 2 H2O. The catalysed reaction is 2 H2O2 = O2 + 2 H2O. Bifunctional enzyme with both catalase and broad-spectrum peroxidase activity. The chain is Catalase-peroxidase from Streptomyces reticuli.